Consider the following 87-residue polypeptide: MTAISSRVNSVFLYWLTTQSGRRSSTAKVFASTSYLSTEKRVRSFINGVFARGCNCACPNSWEHTKVLSAWFKLELITIYLFRLSYL.

This is an uncharacterized protein from Bacillus phage phi105 (Bacteriophage phi-105).